A 908-amino-acid polypeptide reads, in one-letter code: SKI/DACH domain-containing protein 1 (908 aa).

Residues 337 to 353 show a composition bias toward basic residues; it reads HHHHHHHHHHHHHHHRA. Residues 337 to 461 are disordered; sequence HHHHHHHHHH…SSSGSSQVSV (125 aa). Composition is skewed to low complexity over residues 370-389 and 396-410; these read PHLGSFPESCSSDSESSSYS and SDFGSSLSSSSNSVS. Over residues 411-429 the composition is skewed to acidic residues; that stretch reads SEEEEEEGEEEEEEEEEEG. Low complexity predominate over residues 449–461; sequence ESDSSSGSSQVSV. Residue Lys688 forms a Glycyl lysine isopeptide (Lys-Gly) (interchain with G-Cter in SUMO2) linkage. Disordered regions lie at residues 744 to 763 and 792 to 818; these read ETPSLNPLAQSQGLSCTLGS and LQTPPVKPNLKSARSPRPTGKTETNEG. Residues 746–761 are compositionally biased toward polar residues; it reads PSLNPLAQSQGLSCTL.

It belongs to the DACH/dachshund family.

In Homo sapiens (Human), this protein is SKI/DACH domain-containing protein 1 (SKIDA1).